The sequence spans 274 residues: Orotidine 5'-phosphate decarboxylase (274 aa).

K95 serves as the catalytic Proton donor.

Belongs to the OMP decarboxylase family. Type 2 subfamily.

The enzyme catalyses orotidine 5'-phosphate + H(+) = UMP + CO2. The protein operates within pyrimidine metabolism; UMP biosynthesis via de novo pathway; UMP from orotate: step 2/2. The protein is Orotidine 5'-phosphate decarboxylase of Mycolicibacterium paratuberculosis (strain ATCC BAA-968 / K-10) (Mycobacterium paratuberculosis).